A 200-amino-acid polypeptide reads, in one-letter code: 3-isopropylmalate dehydratase small subunit (200 aa).

This sequence belongs to the LeuD family. LeuD type 1 subfamily. In terms of assembly, heterodimer of LeuC and LeuD.

It carries out the reaction (2R,3S)-3-isopropylmalate = (2S)-2-isopropylmalate. It functions in the pathway amino-acid biosynthesis; L-leucine biosynthesis; L-leucine from 3-methyl-2-oxobutanoate: step 2/4. Catalyzes the isomerization between 2-isopropylmalate and 3-isopropylmalate, via the formation of 2-isopropylmaleate. This chain is 3-isopropylmalate dehydratase small subunit, found in Pseudarthrobacter chlorophenolicus (strain ATCC 700700 / DSM 12829 / CIP 107037 / JCM 12360 / KCTC 9906 / NCIMB 13794 / A6) (Arthrobacter chlorophenolicus).